The primary structure comprises 145 residues: UPF0179 protein Msm_0285 (145 aa).

This sequence belongs to the UPF0179 family.

The protein is UPF0179 protein Msm_0285 of Methanobrevibacter smithii (strain ATCC 35061 / DSM 861 / OCM 144 / PS).